Reading from the N-terminus, the 435-residue chain is Serine--tRNA ligase (435 aa).

Residue 241–243 (TAE) participates in L-serine binding. 272–274 (RSE) provides a ligand contact to ATP. Residue Glu-295 participates in L-serine binding. 359–362 (EISS) contributes to the ATP binding site. Ser-395 contacts L-serine.

It belongs to the class-II aminoacyl-tRNA synthetase family. Type-1 seryl-tRNA synthetase subfamily. As to quaternary structure, homodimer. The tRNA molecule binds across the dimer.

It is found in the cytoplasm. It carries out the reaction tRNA(Ser) + L-serine + ATP = L-seryl-tRNA(Ser) + AMP + diphosphate + H(+). The catalysed reaction is tRNA(Sec) + L-serine + ATP = L-seryl-tRNA(Sec) + AMP + diphosphate + H(+). Its pathway is aminoacyl-tRNA biosynthesis; selenocysteinyl-tRNA(Sec) biosynthesis; L-seryl-tRNA(Sec) from L-serine and tRNA(Sec): step 1/1. Functionally, catalyzes the attachment of serine to tRNA(Ser). Is also able to aminoacylate tRNA(Sec) with serine, to form the misacylated tRNA L-seryl-tRNA(Sec), which will be further converted into selenocysteinyl-tRNA(Sec). The polypeptide is Serine--tRNA ligase (Actinobacillus pleuropneumoniae serotype 7 (strain AP76)).